The primary structure comprises 671 residues: DNA ligase (671 aa).

NAD(+) contacts are provided by residues 32–36 (DAEYD), 81–82 (SL), and Glu-113. Lys-115 serves as the catalytic N6-AMP-lysine intermediate. 4 residues coordinate NAD(+): Arg-136, Glu-173, Lys-290, and Lys-314. Positions 408, 411, 426, and 432 each coordinate Zn(2+). The BRCT domain occupies 593–671 (EIDSPFAGKT…EAEMIRLLGA (79 aa)).

It belongs to the NAD-dependent DNA ligase family. LigA subfamily. The cofactor is Mg(2+). Requires Mn(2+) as cofactor.

The enzyme catalyses NAD(+) + (deoxyribonucleotide)n-3'-hydroxyl + 5'-phospho-(deoxyribonucleotide)m = (deoxyribonucleotide)n+m + AMP + beta-nicotinamide D-nucleotide.. Its function is as follows. DNA ligase that catalyzes the formation of phosphodiester linkages between 5'-phosphoryl and 3'-hydroxyl groups in double-stranded DNA using NAD as a coenzyme and as the energy source for the reaction. It is essential for DNA replication and repair of damaged DNA. The chain is DNA ligase from Salmonella paratyphi B (strain ATCC BAA-1250 / SPB7).